A 290-amino-acid polypeptide reads, in one-letter code: Arylamine N-acetyltransferase, pineal gland isozyme NAT-10 (290 aa).

Cysteine 68 functions as the Acyl-thioester intermediate in the catalytic mechanism. Catalysis depends on residues histidine 107 and aspartate 122.

This sequence belongs to the arylamine N-acetyltransferase family.

The enzyme catalyses an arylamine + acetyl-CoA = an N-acetylarylamine + CoA. This chain is Arylamine N-acetyltransferase, pineal gland isozyme NAT-10, found in Gallus gallus (Chicken).